A 221-amino-acid polypeptide reads, in one-letter code: Thiamine-phosphate synthase (221 aa).

Residues 46-50 (QFREK) and Asn-82 each bind 4-amino-2-methyl-5-(diphosphooxymethyl)pyrimidine. Mg(2+)-binding residues include Asp-83 and Asp-102. 4-amino-2-methyl-5-(diphosphooxymethyl)pyrimidine is bound at residue Ser-121. 148 to 150 (TQS) is a binding site for 2-[(2R,5Z)-2-carboxy-4-methylthiazol-5(2H)-ylidene]ethyl phosphate. A 4-amino-2-methyl-5-(diphosphooxymethyl)pyrimidine-binding site is contributed by Lys-151. Residues Gly-180 and 200 to 201 (IS) contribute to the 2-[(2R,5Z)-2-carboxy-4-methylthiazol-5(2H)-ylidene]ethyl phosphate site.

This sequence belongs to the thiamine-phosphate synthase family. It depends on Mg(2+) as a cofactor.

It carries out the reaction 2-[(2R,5Z)-2-carboxy-4-methylthiazol-5(2H)-ylidene]ethyl phosphate + 4-amino-2-methyl-5-(diphosphooxymethyl)pyrimidine + 2 H(+) = thiamine phosphate + CO2 + diphosphate. The catalysed reaction is 2-(2-carboxy-4-methylthiazol-5-yl)ethyl phosphate + 4-amino-2-methyl-5-(diphosphooxymethyl)pyrimidine + 2 H(+) = thiamine phosphate + CO2 + diphosphate. The enzyme catalyses 4-methyl-5-(2-phosphooxyethyl)-thiazole + 4-amino-2-methyl-5-(diphosphooxymethyl)pyrimidine + H(+) = thiamine phosphate + diphosphate. It functions in the pathway cofactor biosynthesis; thiamine diphosphate biosynthesis; thiamine phosphate from 4-amino-2-methyl-5-diphosphomethylpyrimidine and 4-methyl-5-(2-phosphoethyl)-thiazole: step 1/1. Condenses 4-methyl-5-(beta-hydroxyethyl)thiazole monophosphate (THZ-P) and 2-methyl-4-amino-5-hydroxymethyl pyrimidine pyrophosphate (HMP-PP) to form thiamine monophosphate (TMP). In Pasteurella multocida (strain Pm70), this protein is Thiamine-phosphate synthase.